The following is a 230-amino-acid chain: Small ribosomal subunit protein uS3 (230 aa).

Positions 39 to 107 constitute a KH type-2 domain; that stretch reads VRKYLADKLQ…PAQINIAEIR (69 aa).

This sequence belongs to the universal ribosomal protein uS3 family. In terms of assembly, part of the 30S ribosomal subunit. Forms a tight complex with proteins S10 and S14.

Binds the lower part of the 30S subunit head. Binds mRNA in the 70S ribosome, positioning it for translation. The chain is Small ribosomal subunit protein uS3 from Shewanella oneidensis (strain ATCC 700550 / JCM 31522 / CIP 106686 / LMG 19005 / NCIMB 14063 / MR-1).